The following is a 238-amino-acid chain: Large ribosomal subunit protein uL3 (238 aa).

2 disordered regions span residues Ser-140–Gly-164 and Leu-212–Ala-238. Gln-151 is modified (N5-methylglutamine). Positions Ala-225–Ala-238 are enriched in low complexity.

Belongs to the universal ribosomal protein uL3 family. As to quaternary structure, part of the 50S ribosomal subunit. Forms a cluster with proteins L14 and L19. In terms of processing, methylated by PrmB.

Its function is as follows. One of the primary rRNA binding proteins, it binds directly near the 3'-end of the 23S rRNA, where it nucleates assembly of the 50S subunit. The polypeptide is Large ribosomal subunit protein uL3 (Bradyrhizobium diazoefficiens (strain JCM 10833 / BCRC 13528 / IAM 13628 / NBRC 14792 / USDA 110)).